A 190-amino-acid chain; its full sequence is Adenine phosphoribosyltransferase (190 aa).

The protein belongs to the purine/pyrimidine phosphoribosyltransferase family. Homodimer.

The protein resides in the cytoplasm. The enzyme catalyses AMP + diphosphate = 5-phospho-alpha-D-ribose 1-diphosphate + adenine. The protein operates within purine metabolism; AMP biosynthesis via salvage pathway; AMP from adenine: step 1/1. Functionally, catalyzes a salvage reaction resulting in the formation of AMP, that is energically less costly than de novo synthesis. This Cupriavidus metallidurans (strain ATCC 43123 / DSM 2839 / NBRC 102507 / CH34) (Ralstonia metallidurans) protein is Adenine phosphoribosyltransferase.